We begin with the raw amino-acid sequence, 491 residues long: Glutamate--tRNA ligase (491 aa).

Positions 13-23 (PSPTGFLHIGN) match the 'HIGH' region motif. Positions 110, 112, 137, and 139 each coordinate Zn(2+). A 'KMSKS' region motif is present at residues 254–258 (KLSKR). ATP is bound at residue K257.

It belongs to the class-I aminoacyl-tRNA synthetase family. Glutamate--tRNA ligase type 1 subfamily. In terms of assembly, monomer. Zn(2+) is required as a cofactor.

The protein localises to the cytoplasm. The enzyme catalyses tRNA(Glu) + L-glutamate + ATP = L-glutamyl-tRNA(Glu) + AMP + diphosphate. Functionally, catalyzes the attachment of glutamate to tRNA(Glu) in a two-step reaction: glutamate is first activated by ATP to form Glu-AMP and then transferred to the acceptor end of tRNA(Glu). The sequence is that of Glutamate--tRNA ligase from Listeria welshimeri serovar 6b (strain ATCC 35897 / DSM 20650 / CCUG 15529 / CIP 8149 / NCTC 11857 / SLCC 5334 / V8).